Here is a 363-residue protein sequence, read N- to C-terminus: Protein-glutamate methylesterase/protein-glutamine glutaminase 2 (363 aa).

The region spanning 6–123 (RVLIVDDSAS…AQFLLESKIH (118 aa)) is the Response regulatory domain. A 4-aspartylphosphate modification is found at D57. The region spanning 172-363 (ARTTESVICI…AMEILRAGNR (192 aa)) is the CheB-type methylesterase domain. Active-site residues include S184, H210, and D306.

It belongs to the CheB family. In terms of processing, phosphorylated by CheA. Phosphorylation of the N-terminal regulatory domain activates the methylesterase activity.

The protein resides in the cytoplasm. It catalyses the reaction [protein]-L-glutamate 5-O-methyl ester + H2O = L-glutamyl-[protein] + methanol + H(+). It carries out the reaction L-glutaminyl-[protein] + H2O = L-glutamyl-[protein] + NH4(+). Functionally, involved in chemotaxis. Part of a chemotaxis signal transduction system that modulates chemotaxis in response to various stimuli. Catalyzes the demethylation of specific methylglutamate residues introduced into the chemoreceptors (methyl-accepting chemotaxis proteins or MCP) by CheR. Also mediates the irreversible deamidation of specific glutamine residues to glutamic acid. The protein is Protein-glutamate methylesterase/protein-glutamine glutaminase 2 of Rhodospirillum rubrum (strain ATCC 11170 / ATH 1.1.1 / DSM 467 / LMG 4362 / NCIMB 8255 / S1).